Reading from the N-terminus, the 110-residue chain is G antigen 2E (110 aa).

The interval 1–110 is disordered; it reads MSWRGRSTYY…NPEEVKTPEE (110 aa). 2 stretches are compositionally biased toward acidic residues: residues 32-45 and 87-96; these read FSDE…EEGE and ECEDGPDGQE.

Belongs to the GAGE family.

In Homo sapiens (Human), this protein is G antigen 2E (GAGE2E).